Reading from the N-terminus, the 111-residue chain is Nucleoid-associated protein glr3498 (111 aa).

Belongs to the YbaB/EbfC family. In terms of assembly, homodimer.

It is found in the cytoplasm. The protein resides in the nucleoid. In terms of biological role, binds to DNA and alters its conformation. May be involved in regulation of gene expression, nucleoid organization and DNA protection. The polypeptide is Nucleoid-associated protein glr3498 (Gloeobacter violaceus (strain ATCC 29082 / PCC 7421)).